The primary structure comprises 447 residues: Multicopper oxidase mco (447 aa).

Positions 1-25 (MMNMKEDKKNTMDMTNMKHHDERKK) are enriched in basic and acidic residues. Positions 1 to 29 (MMNMKEDKKNTMDMTNMKHHDERKKLNSS) are disordered. Cu cation contacts are provided by histidine 107, histidine 109, histidine 147, histidine 149, histidine 375, histidine 378, histidine 380, histidine 428, cysteine 429, histidine 430, histidine 434, and methionine 439.

This sequence belongs to the multicopper oxidase family. Cu cation serves as cofactor.

The protein localises to the cytoplasm. Functionally, may be involved in copper homeostasis and oxidative stress response. This chain is Multicopper oxidase mco (mco), found in Staphylococcus haemolyticus (strain JCSC1435).